The primary structure comprises 391 residues: DNA-directed RNA polymerase subunit Rpo1C (391 aa).

It belongs to the RNA polymerase beta' chain family. Part of the RNA polymerase complex.

It is found in the cytoplasm. The enzyme catalyses RNA(n) + a ribonucleoside 5'-triphosphate = RNA(n+1) + diphosphate. DNA-dependent RNA polymerase (RNAP) catalyzes the transcription of DNA into RNA using the four ribonucleoside triphosphates as substrates. Forms part of the jaw domain. This is DNA-directed RNA polymerase subunit Rpo1C from Thermococcus onnurineus (strain NA1).